The chain runs to 229 residues: Vacuolar protein sorting-associated protein 24 homolog 1 (229 aa).

Residues 15–60 (KQLLRDWQRKLRQECRNIERQIRDIQKEERNVQKAIKEAAKRNDMV) adopt a coiled-coil conformation. The tract at residues 193 to 215 (VPAQKASTSREEEAVAEGVDDEE) is disordered. Residues 206–215 (AVAEGVDDEE) are compositionally biased toward acidic residues.

This sequence belongs to the SNF7 family. In terms of assembly, component of the endosomal sorting required for transport complex III (ESCRT-III), composed at least of VPS2, VPS20, VPS24 and VPS32. Interacts with SKD1.

It localises to the endosome. Functionally, component of the ESCRT-III complex, which is required for multivesicular bodies (MVBs) formation and sorting of endosomal cargo proteins into MVBs. The ESCRT-III complex is probably involved in the concentration of MVB cargo. This chain is Vacuolar protein sorting-associated protein 24 homolog 1 (VPS24-1), found in Arabidopsis thaliana (Mouse-ear cress).